The sequence spans 310 residues: Isoflavone reductase homolog A622 (310 aa).

Residues 13-19 (GGTGYIG), Arg-38, and Lys-47 contribute to the NADP(+) site. Lys-135 acts as the Proton acceptor in catalysis. Arg-139 is an NADP(+) binding site.

The protein belongs to the NmrA-type oxidoreductase family. Isoflavone reductase subfamily. Monomer. Expressed in roots and stems.

It localises to the cytoplasm. Its pathway is alkaloid biosynthesis; nicotine biosynthesis. Functionally, NADPH-binding protein. Involved in the biosynthesis of pyridine alkaloid natural products, leading mainly to the production of anabasine, anatabine, nicotine and nornicotine, effective deterrents against herbivores with antiparasitic and pesticide properties (neurotoxins); nornicotine serves as the precursor in the synthesis of the carcinogen compound N'-nitrosonornicotine (NNN). Reductase involved in a late step of tobacco alkaloid biosynthesis. Triggers either the formation of a nicotinic acid-derived precursor or the final condensation reaction of tobacco alkaloids. In Nicotiana sylvestris (Wood tobacco), this protein is Isoflavone reductase homolog A622.